The following is a 129-amino-acid chain: Histone H2A-III (129 aa).

This sequence belongs to the histone H2A family. As to quaternary structure, the nucleosome is a histone octamer containing two molecules each of H2A, H2B, H3 and H4 assembled in one H3-H4 heterotetramer and two H2A-H2B heterodimers. The octamer wraps approximately 147 bp of DNA.

It is found in the nucleus. The protein resides in the chromosome. Functionally, core component of nucleosome. Nucleosomes wrap and compact DNA into chromatin, limiting DNA accessibility to the cellular machineries which require DNA as a template. Histones thereby play a central role in transcription regulation, DNA repair, DNA replication and chromosomal stability. DNA accessibility is regulated via a complex set of post-translational modifications of histones, also called histone code, and nucleosome remodeling. This Volvox carteri (Green alga) protein is Histone H2A-III.